The chain runs to 118 residues: Cell division protein SepF (118 aa).

An important for localization in a ring-like structure at midcell region spans residues 1–12 (MGIMSKILGGGG).

As to quaternary structure, homodimer. Does not oligomerize. Interacts with FtsZ2.

Its subcellular location is the cytoplasm. Involved in cell division. Probably acts as a membrane anchor for FstZ2, tethering its filaments to the division site. May be involved in septum closure. The protein is Cell division protein SepF of Haloferax volcanii (strain ATCC 29605 / DSM 3757 / JCM 8879 / NBRC 14742 / NCIMB 2012 / VKM B-1768 / DS2) (Halobacterium volcanii).